Here is a 362-residue protein sequence, read N- to C-terminus: Biotin synthase (362 aa).

Residues 39 to 267 (NVVQVSTLLS…ETQVRLSAGR (229 aa)) form the Radical SAM core domain. Positions 54, 58, and 61 each coordinate [4Fe-4S] cluster. Residues Cys-98, Cys-130, Cys-190, and Arg-262 each coordinate [2Fe-2S] cluster. The segment at 317–362 (PFTKVSQPTTVEAKDSRYESLGEKPKWSRPSHTIEKNLELSGKGKN) is disordered. Positions 328-354 (EAKDSRYESLGEKPKWSRPSHTIEKNL) are enriched in basic and acidic residues.

Belongs to the radical SAM superfamily. Biotin synthase family. Homodimer. [4Fe-4S] cluster serves as cofactor. [2Fe-2S] cluster is required as a cofactor.

It carries out the reaction (4R,5S)-dethiobiotin + (sulfur carrier)-SH + 2 reduced [2Fe-2S]-[ferredoxin] + 2 S-adenosyl-L-methionine = (sulfur carrier)-H + biotin + 2 5'-deoxyadenosine + 2 L-methionine + 2 oxidized [2Fe-2S]-[ferredoxin]. It participates in cofactor biosynthesis; biotin biosynthesis; biotin from 7,8-diaminononanoate: step 2/2. In terms of biological role, catalyzes the conversion of dethiobiotin (DTB) to biotin by the insertion of a sulfur atom into dethiobiotin via a radical-based mechanism. This Flavobacterium psychrophilum (strain ATCC 49511 / DSM 21280 / CIP 103535 / JIP02/86) protein is Biotin synthase.